Reading from the N-terminus, the 272-residue chain is Ribonuclease HII (272 aa).

One can recognise an RNase H type-2 domain in the interval 30-221; sequence GPVAGVDEVG…VRRAAEATGV (192 aa). A divalent metal cation contacts are provided by aspartate 36, glutamate 37, and aspartate 130.

The protein belongs to the RNase HII family. The cofactor is Mn(2+). Requires Mg(2+) as cofactor.

Its subcellular location is the cytoplasm. The enzyme catalyses Endonucleolytic cleavage to 5'-phosphomonoester.. Functionally, endonuclease that specifically degrades the RNA of RNA-DNA hybrids. This is Ribonuclease HII from Mycolicibacterium smegmatis (strain ATCC 700084 / mc(2)155) (Mycobacterium smegmatis).